Consider the following 160-residue polypeptide: Ribosome maturation factor RimP (160 aa).

The protein belongs to the RimP family.

It localises to the cytoplasm. Its function is as follows. Required for maturation of 30S ribosomal subunits. The sequence is that of Ribosome maturation factor RimP from Geobacter sp. (strain M21).